We begin with the raw amino-acid sequence, 1166 residues long: Myosin-1 (1166 aa).

Residues 1–13 (MSQKVTPFMQSLK) show a composition bias toward polar residues. Residues 1–71 (MSQKVTPFMQ…AGDSEDSPYS (71 aa)) form a disordered region. Ser14 carries the phosphoserine modification. Residues 32–45 (NSSGASVRLTNSNV) show a composition bias toward polar residues. The 50-residue stretch at 112 to 161 (KKILQSWIQLPNGNWELGKILSTSGEESVISLPEGKVIKVISETLVPANP) folds into the Myosin N-terminal SH3-like domain. In terms of domain architecture, Myosin motor spans 165–837 (DGVDDLMQLS…QIGVLEDTRN (673 aa)). ATP contacts are provided by residues 256–263 (GESGAGKT) and 304–312 (NDNSSRFGK). Actin-binding stretches follow at residues 589–623 (LFEKKPLGLLSLLDEESTFPNGTDLTLANKLKQHL) and 717–739 (LFQLMQRLGNTTPHFIRCIKPNN). IQ domains lie at 839-868 (TLHGILRVQSSFRGYQARCLLKELKRGISI), 862-891 (LKRGISILQSFVRGEKIRKEFAELRRRHKA), 888-917 (RHKAAATIQSQVKSKIARIQYKGIADASVV), and 911-940 (IADASVVIQSAIRGWLVRRCSGDIGWLKSG). The stretch at 955–1005 (SVLSELQRRVLKAEAALREKEEENDILQQRLQQYENRWSEYETKMKSMEEI) forms a coiled coil. The disordered stretch occupies residues 1030-1065 (ARNSDASVNASDATDWDSSSNQFRSQTSNGVGSRLQ). Residues 1032-1060 (NSDASVNASDATDWDSSSNQFRSQTSNGV) show a composition bias toward polar residues.

Belongs to the TRAFAC class myosin-kinesin ATPase superfamily. Myosin family. Plant myosin class VIII subfamily. As to quaternary structure, homodimer.

The protein localises to the cell junction. The protein resides in the plasmodesma. It is found in the cytoplasm. Its subcellular location is the cytoskeleton. It localises to the phragmoplast. The protein localises to the endosome. The protein resides in the endoplasmic reticulum. Myosin heavy chain that is required for the cell cycle-regulated transport of various organelles and proteins for their segregation. Functions by binding with its tail domain to receptor proteins on organelles and exerting force with its N-terminal motor domain against actin filaments, thereby transporting its cargo along polarized actin cables. Involved in endocytosis via its action in endosomal trafficking. The sequence is that of Myosin-1 (VIII-1) from Arabidopsis thaliana (Mouse-ear cress).